Reading from the N-terminus, the 545-residue chain is E3 ubiquitin-protein ligase ipaH9.8 (545 aa).

Residues 1–242 (MLPINNNFSL…YHGPRIYFSM (242 aa)) form an interaction with target proteins region. LRR repeat units lie at residues 57-77 (NSDE…NLPA), 78-99 (QITL…PVTL), 100-117 (KKLY…VLPP), 118-139 (ALES…PDSL), 140-157 (LTMN…SLPQ), 158-179 (ALKN…SEGN), 182-203 (VVRE…ILNL), and 205-228 (NECS…QRLT). The interval 243–250 (SDGQQNTL) is linker. Residues 251–545 (HRPLADAVTA…SENGSQLHHS (295 aa)) form an E3 ubiquitin-protein ligase catalytic domain region. An NEL domain is found at 253 to 545 (PLADAVTAWF…SENGSQLHHS (293 aa)). Cysteine 337 (glycyl thioester intermediate) is an active-site residue.

It belongs to the LRR-containing bacterial E3 ligase family. As to quaternary structure, also interacts with human and mouse U2AF1 (U2AF35). Ubiquitinated in the presence of host E1 ubiquitin-activating enzyme, E2 ubiquitin-conjugating enzyme and ubiquitin.

Its subcellular location is the secreted. It is found in the host cytoplasm. The protein resides in the host nucleus. It catalyses the reaction S-ubiquitinyl-[E2 ubiquitin-conjugating enzyme]-L-cysteine + [acceptor protein]-L-lysine = [E2 ubiquitin-conjugating enzyme]-L-cysteine + N(6)-ubiquitinyl-[acceptor protein]-L-lysine.. With respect to regulation, exists in an autoinhibited state in the absence of substrate protein, due to interactions of the leucine-rich repeats with NEL domain. Is activated upon binding to a substrate protein. In terms of biological role, effector E3 ubiquitin ligase that interferes with host's ubiquitination pathway and modulates the acute inflammatory responses, thus facilitating bacterial colonization within the host cell. Interacts with IKBKG (NEMO) and TNIP1 (ABIN-1), a ubiquitin-binding adapter protein, which results in TNIP1-dependent 'Lys-27'-linked polyubiquitination of IKBKG. Consequently, polyubiquitinated IKBKG undergoes proteasome-dependent degradation, which perturbs NF-kappa-B activation during bacterial infection. Mediates polyubiquitination of host U2AF1, leading to its proteasomal degradation. Catalyzes 'Lys-48'-linked polyubiquitination and subsequent degradation of a subset of host guanylate-binding proteins (GBP1, GBP2, GBP4 and GBP6), thereby suppressing host cell defense. In contrast, host GBP3 and GBP7 are not ubiquitinated by IpaH9.8. Uses UBE2D2 (UBCH5B) as an E2 ubiquitin-conjugating enzyme. In Shigella boydii serotype 18 (strain CDC 3083-94 / BS512), this protein is E3 ubiquitin-protein ligase ipaH9.8 (ipaH9.8).